A 205-amino-acid chain; its full sequence is MIIKSAKFMSSATKPGNYPPPELPEIAFAGRSNVGKSSLINSLLKRKKLVKTSSTPGRTQLLNFFEVNESLVFVDLPGYGYAKVSKEMRKKWGQMIETFITTRKTLHGVVLILDLRRIPGGQERENLAWFDLNNIPVILVATKADKFSRQRQLAQQKEMAKALGIPLDVIHVFSAKTGQGRDELWESILDLCEIDDFEQGDDDNV.

In terms of domain architecture, EngB-type G spans 22–194 (ELPEIAFAGR…WESILDLCEI (173 aa)). Residues 30 to 37 (GRSNVGKS), 57 to 61 (GRTQL), 75 to 78 (DLPG), 142 to 145 (TKAD), and 173 to 175 (FSA) each bind GTP. Residues serine 37 and threonine 59 each contribute to the Mg(2+) site.

This sequence belongs to the TRAFAC class TrmE-Era-EngA-EngB-Septin-like GTPase superfamily. EngB GTPase family. It depends on Mg(2+) as a cofactor.

In terms of biological role, necessary for normal cell division and for the maintenance of normal septation. In Desulfatibacillum aliphaticivorans, this protein is Probable GTP-binding protein EngB.